Reading from the N-terminus, the 245-residue chain is Polynucleotide 3'-phosphatase (245 aa).

The protein belongs to the DNA 3' phosphatase family.

Its subcellular location is the nucleus. It catalyses the reaction a 3'end (2'-deoxyribonucleotide 3'-phosphate)-DNA + H2O = a 3'-end 2'-deoxyribonucleotide-DNA + phosphate. Functionally, dephosphorylate DNA's 3'-phosphate termini. Has a role in the repair of breaks in single-stranded DNA. This Saccharomyces mikatae (Yeast) protein is Polynucleotide 3'-phosphatase (TPP1).